The chain runs to 193 residues: Putative manganese efflux pump MntP (193 aa).

6 consecutive transmembrane segments (helical) span residues 3 to 23, 41 to 61, 69 to 89, 107 to 127, 130 to 150, and 164 to 184; these read IFAV…VAVV, AAFG…GVSV, DHWI…LSGL, AGRN…AVGL, AILG…CAVI, and LCAL…AIAC.

It belongs to the MntP (TC 9.B.29) family.

The protein localises to the cell inner membrane. Probably functions as a manganese efflux pump. The chain is Putative manganese efflux pump MntP from Desulfovibrio desulfuricans (strain ATCC 27774 / DSM 6949 / MB).